We begin with the raw amino-acid sequence, 500 residues long: Farnesylcysteine lyase (500 aa).

The N-terminal stretch at methionine 1 to glycine 24 is a signal peptide. N-linked (GlcNAc...) asparagine glycosylation is found at asparagine 56, asparagine 113, asparagine 211, and asparagine 281.

It belongs to the prenylcysteine oxidase family. Requires FAD as cofactor. In terms of tissue distribution, expressed in seedilings, flowers, stems, leaves and roots.

It is found in the lysosome. The enzyme catalyses S-(2E,6E)-farnesyl-L-cysteine + O2 + H2O = (2E,6E)-farnesal + L-cysteine + H2O2. Functionally, involved in the degradation of prenylcysteine. Cleaves specifically the thioether bond of S-farnesyl-L-cysteine and has no activity with S-geranylgeranyl-L-cysteine. Also recognizes N-acetyl-farnesylcysteine and may have a role in deprenylation of farnesylated proteins. The sequence is that of Farnesylcysteine lyase from Arabidopsis thaliana (Mouse-ear cress).